Reading from the N-terminus, the 107-residue chain is Thioredoxin 1 (107 aa).

One can recognise a Thioredoxin domain in the interval serine 2–leucine 107. Cysteine 32 and cysteine 35 are disulfide-bonded.

The protein belongs to the thioredoxin family.

Its function is as follows. Participates in various redox reactions through the reversible oxidation of its active center dithiol to a disulfide and catalyzes dithiol-disulfide exchange reactions. This Synechococcus elongatus (strain ATCC 33912 / PCC 7942 / FACHB-805) (Anacystis nidulans R2) protein is Thioredoxin 1 (trxA).